The following is a 140-amino-acid chain: Nucleoside diphosphate kinase (140 aa).

ATP-binding residues include lysine 11, phenylalanine 59, arginine 87, threonine 93, arginine 104, and asparagine 114. Histidine 117 functions as the Pros-phosphohistidine intermediate in the catalytic mechanism.

The protein belongs to the NDK family. Homotetramer. The cofactor is Mg(2+).

It is found in the cytoplasm. The enzyme catalyses a 2'-deoxyribonucleoside 5'-diphosphate + ATP = a 2'-deoxyribonucleoside 5'-triphosphate + ADP. It catalyses the reaction a ribonucleoside 5'-diphosphate + ATP = a ribonucleoside 5'-triphosphate + ADP. Its function is as follows. Major role in the synthesis of nucleoside triphosphates other than ATP. The ATP gamma phosphate is transferred to the NDP beta phosphate via a ping-pong mechanism, using a phosphorylated active-site intermediate. The chain is Nucleoside diphosphate kinase from Methylorubrum extorquens (strain CM4 / NCIMB 13688) (Methylobacterium extorquens).